The primary structure comprises 281 residues: MSEYQPSLFALNPMGFSPLDGSKSTNENVSASTSTAKPMVGQLIFDKFIKTEEDPIIKQDTPSNLDFDFALPQTATAPDAKTVLPIPELDDAVVESFFSSSTDSTPMFEYENLEDNSKEWTSLFDNDIPVTTDDVSLADKAIESTEEVSLVPSNLEVSTTSFLPTPVLEDAKLTQTRKVKKPNSVVKKSHHVGKDDESRLDHLGVVAYNRKQRSIPLSPIVPESSDPAALKRARNTEAARRSRARKLQRMKQLEDKVEELLSKNYHLENEVARLKKLVGER.

The residue at position 17 (Ser-17) is a Phosphoserine. 2 required for transcriptional activation regions span residues 89–100 (LDDAVVESFFSS) and 106–125 (PMFE…SLFD). A Phosphothreonine; by PHO85 modification is found at Thr-165. The short motif at 167–200 (VLEDAKLTQTRKVKKPNSVVKKSHHVGKDDESRL) is the Nuclear localization signal element. The tract at residues 217-248 (LSPIVPESSDPAALKRARNTEAARRSRARKLQ) is disordered. Position 218 is a phosphoserine (Ser-218). The region spanning 225–281 (SDPAALKRARNTEAARRSRARKLQRMKQLEDKVEELLSKNYHLENEVARLKKLVGER) is the bZIP domain. A Nuclear localization signal motif is present at residues 231-249 (KRARNTEAARRSRARKLQR). The interval 231–251 (KRARNTEAARRSRARKLQRMK) is basic motif. A leucine-zipper region spans residues 253-274 (LEDKVEELLSKNYHLENEVARL).

It belongs to the bZIP family. GCN4 subfamily. Homodimer. Each subunit binds overlapping and non-identical half-sites that flank the central CG base-pair in the pseudo-palindromic motif 5'-ATGA[CG]TCAT-3'. Interacts with the mediator tail; the interaction with GAL11/MED15 is direct. Interacts with the SAGA histone acetyltransferase complex. Interacts with the SWI/SNF chromatin remodeling complex. Phosphorylated by the cyclin-CDK PCL5-PHO85. Phosphorylation of Thr-165 induces degradation of GCN4 by the E3 ubiquitin ligase complex SCF(Cdc4).

It is found in the nucleus. Functionally, master transcriptional regulator that mediates the response to amino acid starvation. Binds variations of the DNA sequence 5'-ATGA[CG]TCAT-3' in canonical nucleosome-depleted 5'-positioned promoters, and also within coding sequences and 3' non-coding regions. During nutrient starvation (low or poor amino acid, carbon or purine sources), it activates genes required for amino acid biosynthesis and transport, autophagy, cofactor biosynthesis and transport, mitochondrial transport, and additional downstream transcription factors. Activates transcription by recruiting multiple coactivators, including the mediator complex, the SAGA complex, and the SWI/SNF complex, to enable assembly of the pre-initiation complex at core promoters. This chain is General control transcription factor GCN4, found in Saccharomyces cerevisiae (strain ATCC 204508 / S288c) (Baker's yeast).